Reading from the N-terminus, the 160-residue chain is ATP synthase subunit b (160 aa).

Residues Leu15–Glu35 form a helical membrane-spanning segment.

Belongs to the ATPase B chain family. As to quaternary structure, F-type ATPases have 2 components, F(1) - the catalytic core - and F(0) - the membrane proton channel. F(1) has five subunits: alpha(3), beta(3), gamma(1), delta(1), epsilon(1). F(0) has four main subunits: a(1), b(1), b'(1) and c(10-14). The alpha and beta chains form an alternating ring which encloses part of the gamma chain. F(1) is attached to F(0) by a central stalk formed by the gamma and epsilon chains, while a peripheral stalk is formed by the delta, b and b' chains.

It localises to the cellular thylakoid membrane. Its function is as follows. F(1)F(0) ATP synthase produces ATP from ADP in the presence of a proton or sodium gradient. F-type ATPases consist of two structural domains, F(1) containing the extramembraneous catalytic core and F(0) containing the membrane proton channel, linked together by a central stalk and a peripheral stalk. During catalysis, ATP synthesis in the catalytic domain of F(1) is coupled via a rotary mechanism of the central stalk subunits to proton translocation. Component of the F(0) channel, it forms part of the peripheral stalk, linking F(1) to F(0). The protein is ATP synthase subunit b of Synechococcus sp. (strain CC9902).